We begin with the raw amino-acid sequence, 159 residues long: NADH-quinone oxidoreductase subunit B (159 aa).

[4Fe-4S] cluster-binding residues include Cys-32, Cys-33, Cys-97, and Cys-126.

The protein belongs to the complex I 20 kDa subunit family. In terms of assembly, NDH-1 is composed of 14 different subunits. Subunits NuoB, C, D, E, F, and G constitute the peripheral sector of the complex. Requires [4Fe-4S] cluster as cofactor.

Its subcellular location is the cell inner membrane. The catalysed reaction is a quinone + NADH + 5 H(+)(in) = a quinol + NAD(+) + 4 H(+)(out). Its function is as follows. NDH-1 shuttles electrons from NADH, via FMN and iron-sulfur (Fe-S) centers, to quinones in the respiratory chain. The immediate electron acceptor for the enzyme in this species is believed to be ubiquinone. Couples the redox reaction to proton translocation (for every two electrons transferred, four hydrogen ions are translocated across the cytoplasmic membrane), and thus conserves the redox energy in a proton gradient. This Helicobacter pylori (strain P12) protein is NADH-quinone oxidoreductase subunit B.